Consider the following 187-residue polypeptide: Large ribosomal subunit protein uL5 (187 aa).

Belongs to the universal ribosomal protein uL5 family. Part of the 50S ribosomal subunit; part of the 5S rRNA/L5/L18/L25 subcomplex. Contacts the 5S rRNA and the P site tRNA. Forms a bridge to the 30S subunit in the 70S ribosome.

Functionally, this is one of the proteins that bind and probably mediate the attachment of the 5S RNA into the large ribosomal subunit, where it forms part of the central protuberance. In the 70S ribosome it contacts protein S13 of the 30S subunit (bridge B1b), connecting the 2 subunits; this bridge is implicated in subunit movement. Contacts the P site tRNA; the 5S rRNA and some of its associated proteins might help stabilize positioning of ribosome-bound tRNAs. This chain is Large ribosomal subunit protein uL5, found in Mycobacterium leprae (strain Br4923).